The sequence spans 489 residues: Cobyric acid synthase (489 aa).

Positions 251–439 constitute a GATase cobBQ-type domain; that stretch reads RLTVVAPVYP…LHGLFDTPAA (189 aa). C332 serves as the catalytic Nucleophile. Residue H431 is part of the active site.

The protein belongs to the CobB/CobQ family. CobQ subfamily.

It participates in cofactor biosynthesis; adenosylcobalamin biosynthesis. Its function is as follows. Catalyzes amidations at positions B, D, E, and G on adenosylcobyrinic A,C-diamide. NH(2) groups are provided by glutamine, and one molecule of ATP is hydrogenolyzed for each amidation. This Aromatoleum aromaticum (strain DSM 19018 / LMG 30748 / EbN1) (Azoarcus sp. (strain EbN1)) protein is Cobyric acid synthase.